A 259-amino-acid polypeptide reads, in one-letter code: Hemin import ATP-binding protein HmuV (259 aa).

In terms of domain architecture, ABC transporter spans 6–242; sequence IQGRDLCVTY…ERIEQVYGYQ (237 aa). 38-45 serves as a coordination point for ATP; sequence GPNGAGKS.

It belongs to the ABC transporter superfamily. Heme (hemin) importer (TC 3.A.1.14.5) family. In terms of assembly, the complex is composed of two ATP-binding proteins (HmuV), two transmembrane proteins (HmuU) and a solute-binding protein (HmuT).

It is found in the cell inner membrane. In terms of biological role, part of the ABC transporter complex HmuTUV involved in hemin import. Responsible for energy coupling to the transport system. The protein is Hemin import ATP-binding protein HmuV of Vibrio cholerae serotype O1 (strain ATCC 39315 / El Tor Inaba N16961).